The following is a 226-amino-acid chain: V-type proton ATPase subunit E 1 (226 aa).

N-acetylalanine is present on A2. At Y56 the chain carries Phosphotyrosine.

This sequence belongs to the V-ATPase E subunit family. As to quaternary structure, V-ATPase is a heteromultimeric enzyme made up of two complexes: the ATP-hydrolytic V1 complex and the proton translocation V0 complex. The V1 complex consists of three catalytic AB heterodimers that form a heterohexamer, three peripheral stalks each consisting of EG heterodimers, one central rotor including subunits D and F, and the regulatory subunits C and H. The proton translocation complex V0 consists of the proton transport subunit a, a ring of proteolipid subunits c9c'', rotary subunit d, subunits e and f, and the accessory subunits ATP6AP1/Ac45 and ATP6AP2/PRR. Interacts with RABL2/RABL2A; binds preferentially to GTP-bound RABL2. Interacts with ALDOC. Interacts with RAB11B. As to expression, expressed in brain (at protein level).

It is found in the apical cell membrane. The protein resides in the cytoplasmic vesicle. Its subcellular location is the secretory vesicle. It localises to the synaptic vesicle membrane. The protein localises to the clathrin-coated vesicle membrane. In terms of biological role, subunit of the V1 complex of vacuolar(H+)-ATPase (V-ATPase), a multisubunit enzyme composed of a peripheral complex (V1) that hydrolyzes ATP and a membrane integral complex (V0) that translocates protons. V-ATPase is responsible for acidifying and maintaining the pH of intracellular compartments and in some cell types, is targeted to the plasma membrane, where it is responsible for acidifying the extracellular environment. The chain is V-type proton ATPase subunit E 1 (Atp6v1e1) from Rattus norvegicus (Rat).